The primary structure comprises 192 residues: GTP-dependent dephospho-CoA kinase (192 aa).

GTP-binding residues include Asp49, Val50, Val51, Asp68, Lys70, and Glu127.

Belongs to the GTP-dependent DPCK family.

The catalysed reaction is 3'-dephospho-CoA + GTP = GDP + CoA + H(+). It participates in cofactor biosynthesis; coenzyme A biosynthesis. In terms of biological role, catalyzes the GTP-dependent phosphorylation of the 3'-hydroxyl group of dephosphocoenzyme A to form coenzyme A (CoA). The protein is GTP-dependent dephospho-CoA kinase of Halorubrum lacusprofundi (strain ATCC 49239 / DSM 5036 / JCM 8891 / ACAM 34).